A 133-amino-acid polypeptide reads, in one-letter code: ATP synthase epsilon chain, chloroplastic (133 aa).

The protein belongs to the ATPase epsilon chain family. In terms of assembly, F-type ATPases have 2 components, CF(1) - the catalytic core - and CF(0) - the membrane proton channel. CF(1) has five subunits: alpha(3), beta(3), gamma(1), delta(1), epsilon(1). CF(0) has three main subunits: a, b and c.

Its subcellular location is the plastid. It is found in the chloroplast thylakoid membrane. Functionally, produces ATP from ADP in the presence of a proton gradient across the membrane. The chain is ATP synthase epsilon chain, chloroplastic from Helianthus annuus (Common sunflower).